The chain runs to 106 residues: Iron-sulfur cluster assembly protein CyaY (106 aa).

This sequence belongs to the frataxin family.

In terms of biological role, involved in iron-sulfur (Fe-S) cluster assembly. May act as a regulator of Fe-S biogenesis. The polypeptide is Iron-sulfur cluster assembly protein CyaY (Salmonella newport (strain SL254)).